Reading from the N-terminus, the 494-residue chain is UPF0371 protein SPJ_0333 (494 aa).

The protein belongs to the UPF0371 family.

This is UPF0371 protein SPJ_0333 from Streptococcus pneumoniae (strain JJA).